A 431-amino-acid polypeptide reads, in one-letter code: Ribosomal RNA small subunit methyltransferase B (431 aa).

Residues 254–260 (CAAPGGK), Asp-277, Asp-303, and Asp-322 contribute to the S-adenosyl-L-methionine site. The active-site Nucleophile is the Cys-375.

Belongs to the class I-like SAM-binding methyltransferase superfamily. RsmB/NOP family.

It localises to the cytoplasm. The enzyme catalyses cytidine(967) in 16S rRNA + S-adenosyl-L-methionine = 5-methylcytidine(967) in 16S rRNA + S-adenosyl-L-homocysteine + H(+). Functionally, specifically methylates the cytosine at position 967 (m5C967) of 16S rRNA. The protein is Ribosomal RNA small subunit methyltransferase B of Klebsiella pneumoniae subsp. pneumoniae (strain ATCC 700721 / MGH 78578).